We begin with the raw amino-acid sequence, 334 residues long: Phospholipase A1 2 (334 aa).

An N-terminal signal peptide occupies residues 1 to 23; it reads MMNLKYLLFFCLVQALHYCYAYG. Positions 24–33 are excised as a propeptide; it reads DPSLSNELDR. Residues cysteine 37 and cysteine 120 are joined by a disulfide bond. Catalysis depends on serine 170, which acts as the Nucleophile. Catalysis depends on aspartate 198, which acts as the Charge relay system. Disulfide bonds link cysteine 209-cysteine 214 and cysteine 252-cysteine 261. The Charge relay system role is filled by histidine 263. 3 disulfide bridges follow: cysteine 278-cysteine 302, cysteine 279-cysteine 327, and cysteine 295-cysteine 300.

The protein belongs to the AB hydrolase superfamily. Lipase family. In terms of processing, not glycosylated. As to expression, expressed by the venom gland.

The protein resides in the secreted. The catalysed reaction is a 1,2-diacyl-sn-glycero-3-phosphocholine + H2O = a 2-acyl-sn-glycero-3-phosphocholine + a fatty acid + H(+). Catalyzes the hydrolysis of phosphatidylcholine with phospholipase A1 activity (6.3 U/ml). May act as an allergen and induce hemolytic activity. The sequence is that of Phospholipase A1 2 from Vespa affinis (Lesser banded hornet).